The primary structure comprises 216 residues: Small ribosomal subunit protein uS3 (216 aa).

The KH type-2 domain occupies 38 to 106; the sequence is LRKMLKDKLY…QANIEIKEVR (69 aa).

Belongs to the universal ribosomal protein uS3 family. As to quaternary structure, part of the 30S ribosomal subunit. Forms a tight complex with proteins S10 and S14.

Binds the lower part of the 30S subunit head. Binds mRNA in the 70S ribosome, positioning it for translation. The polypeptide is Small ribosomal subunit protein uS3 (Thermodesulfovibrio yellowstonii (strain ATCC 51303 / DSM 11347 / YP87)).